A 428-amino-acid chain; its full sequence is UDP-N-acetylglucosamine 1-carboxyvinyltransferase (428 aa).

25–26 (KN) provides a ligand contact to phosphoenolpyruvate. Arg-102 is a UDP-N-acetyl-alpha-D-glucosamine binding site. Residue Cys-126 is the Proton donor of the active site. Cys-126 bears the 2-(S-cysteinyl)pyruvic acid O-phosphothioketal mark. Residues Asp-316 and Val-338 each contribute to the UDP-N-acetyl-alpha-D-glucosamine site.

This sequence belongs to the EPSP synthase family. MurA subfamily.

It localises to the cytoplasm. It carries out the reaction phosphoenolpyruvate + UDP-N-acetyl-alpha-D-glucosamine = UDP-N-acetyl-3-O-(1-carboxyvinyl)-alpha-D-glucosamine + phosphate. The protein operates within cell wall biogenesis; peptidoglycan biosynthesis. Its function is as follows. Cell wall formation. Adds enolpyruvyl to UDP-N-acetylglucosamine. This Anaplasma marginale (strain Florida) protein is UDP-N-acetylglucosamine 1-carboxyvinyltransferase.